The sequence spans 291 residues: MDKKAKIYTWSHIILIVFSLVCLHWFFILSITIPNQTGFLINRVGQWINSSSTYAYKIDPRSLFYLNYTLNFNIALNASGIASIVLFICYILTFIFNLIMIGIIRSWRPSLLHLIIAILIWLAILYLFIIIMIKPNFNQIINNSYYTWLKNVIFNDQTLTLNKKNVILNTYINHYHLPIINDPQVALLDISKHQINNENLTFNPSYNYNANLYFTKAKLIYCTYTIIGIIFIISFIYYLSEIIKRCLLVNDNWKIKQHERKDGLNIKKRKNKQEIVAPDPILEEIFKELDL.

A run of 4 helical transmembrane segments spans residues 13–33 (IILI…SITI), 84–104 (IVLF…IGII), 111–131 (LLHL…FIII), and 219–239 (LIYC…IYYL).

The protein localises to the cell membrane. This is an uncharacterized protein from Ureaplasma parvum serovar 3 (strain ATCC 700970).